The following is a 129-amino-acid chain: Small ribosomal subunit protein uS8mz (129 aa).

Belongs to the universal ribosomal protein uS8 family. In terms of assembly, component of the mitochondrial ribosome small subunit.

The protein localises to the mitochondrion. This chain is Small ribosomal subunit protein uS8mz (RPS15AB), found in Arabidopsis thaliana (Mouse-ear cress).